Consider the following 147-residue polypeptide: Hemoglobin subunit epsilon (147 aa).

The Globin domain maps to 3–147 (HFTAEEKAAI…VAIALGHKYH (145 aa)). A phosphoserine mark is found at serine 14 and serine 51. 2 residues coordinate heme b: histidine 64 and histidine 93.

It belongs to the globin family. Heterotetramer of two alpha chains and two epsilon chains in early embryonic hemoglobin Gower-2; two zeta chains and two epsilon chains in early embryonic hemoglobin Gower-1. In terms of tissue distribution, red blood cells.

Its function is as follows. The epsilon chain is a beta-type chain of early mammalian embryonic hemoglobin. This Leontopithecus rosalia (Golden lion tamarin) protein is Hemoglobin subunit epsilon (HBE1).